The chain runs to 185 residues: ATP synthase subunit b, chloroplastic (185 aa).

A helical membrane pass occupies residues 31–53; the sequence is IINITVVLGILIYFGKGVLSNLL.

This sequence belongs to the ATPase B chain family. F-type ATPases have 2 components, F(1) - the catalytic core - and F(0) - the membrane proton channel. F(1) has five subunits: alpha(3), beta(3), gamma(1), delta(1), epsilon(1). F(0) has four main subunits: a(1), b(1), b'(1) and c(10-14). The alpha and beta chains form an alternating ring which encloses part of the gamma chain. F(1) is attached to F(0) by a central stalk formed by the gamma and epsilon chains, while a peripheral stalk is formed by the delta, b and b' chains.

The protein resides in the plastid. It is found in the chloroplast thylakoid membrane. In terms of biological role, f(1)F(0) ATP synthase produces ATP from ADP in the presence of a proton or sodium gradient. F-type ATPases consist of two structural domains, F(1) containing the extramembraneous catalytic core and F(0) containing the membrane proton channel, linked together by a central stalk and a peripheral stalk. During catalysis, ATP synthesis in the catalytic domain of F(1) is coupled via a rotary mechanism of the central stalk subunits to proton translocation. Component of the F(0) channel, it forms part of the peripheral stalk, linking F(1) to F(0). The protein is ATP synthase subunit b, chloroplastic of Gnetum parvifolium (Small-leaved jointfir).